The following is a 1005-amino-acid chain: DNA double-strand break repair Rad50 ATPase (1005 aa).

Residues Lys14, 35–40 (GSGKSS), 62–64 (ITK), and Gln134 contribute to the ATP site. Coiled coils occupy residues 189–230 (KENY…IEKL), 292–321 (LVDE…KQLE), 346–379 (LDTL…EIEK), and 404–498 (AVEY…LKEV). A Zinc-hook domain is found at 457–554 (IEEKKKVLEN…DIEKLKKEID (98 aa)). Zn(2+)-binding residues include Cys502 and Cys505. Coiled-coil stretches lie at residues 523–600 (TQLN…YVIN), 656–692 (KEKC…ELIE), and 800–834 (RQEL…LKEM).

The protein belongs to the SMC family. RAD50 subfamily. As to quaternary structure, homodimer. Forms a heterotetramer composed of two Mre11 subunits and two Rad50 subunits. Requires Zn(2+) as cofactor.

In terms of biological role, part of the Rad50/Mre11 complex, which is involved in the early steps of DNA double-strand break (DSB) repair. The complex may facilitate opening of the processed DNA ends to aid in the recruitment of HerA and NurA. Rad50 controls the balance between DNA end bridging and DNA resection via ATP-dependent structural rearrangements of the Rad50/Mre11 complex. The protein is DNA double-strand break repair Rad50 ATPase of Methanocaldococcus jannaschii (strain ATCC 43067 / DSM 2661 / JAL-1 / JCM 10045 / NBRC 100440) (Methanococcus jannaschii).